The chain runs to 1342 residues: Restriction of telomere capping protein 1 (1342 aa).

Positions 1 to 39 are disordered; the sequence is MSLSPHVENASIPKGSTPIPKNRNVSSIGKGEFLGSSSS. 6 WD repeats span residues 207-248, 256-296, 305-342, 367-406, 439-486, and 489-527; these read NKFS…SIDN, EHTR…SKSS, TASDSIRDVKWMPGYNFASKNDQGSSTYGNLKSGYKFA, AHTGPGLCLNWHPNQEYIATGGRDGKCCLWFVGDNANAAE, NTDY…IPKH, and LSETPSLGLVWWDENLIFNIDKGTRINGWDINKEPTVLE. 5 disordered regions span residues 559 to 593, 600 to 619, 630 to 651, 736 to 766, and 788 to 831; these read PELQPTSSTTCKKHPGTIKNPKNGNPENQGIIGGI, TGLTSFTPERPPTLKAGPTF, ASSFNSSSASLTSLTPQTENRE, KNATETHGDNTTTTNNNDDGDDDDDDDDDDD, and LMNE…DRSR. Residues 630-644 show a composition bias toward low complexity; sequence ASSFNSSSASLTSLT. Positions 753 to 766 are enriched in acidic residues; the sequence is DDGDDDDDDDDDDD. Residues 815–824 show a composition bias toward low complexity; that stretch reads SSISSISASR. A WD 7 repeat occupies 844-884; sequence KIQTLVDLISIATHNASVYLSIDDLTNFKIWILIRDSLLWD. 2 disordered regions span residues 942 to 963 and 1014 to 1047; these read AFRANSDEPSDAEKKPVSKLKE and DEHEHQEEEQPHDSPTKSAQFHASPIAKSIPILQ. 2 stretches are compositionally biased toward basic and acidic residues: residues 952 to 963 and 1016 to 1028; these read DAEKKPVSKLKE and HEHQEEEQPHDSP. Phosphoserine is present on residues Ser-1037, Ser-1081, Ser-1088, Ser-1090, Ser-1124, and Ser-1134. 2 WD repeats span residues 1130-1170 and 1217-1256; these read SRPD…KQLY and LFGIAADVLKYCPFEDIMGSEGDQSSIRLFCERCGELITN. An RING-type; degenerate zinc finger spans residues 1294–1336; sequence CVLCERPLKKLTMVILPCGHEGHFQCIQEWFLDENEQECPGGC.

The protein belongs to the WD repeat RTC1 family.

It is found in the vacuole. Its function is as follows. May be involved in a process influencing telomere capping. The polypeptide is Restriction of telomere capping protein 1 (RTC1) (Saccharomyces cerevisiae (strain RM11-1a) (Baker's yeast)).